The chain runs to 263 residues: uncharacterized protein (263 aa).

The interval 183 to 263 (APHDRPEGVP…PPSTNTKGAA (81 aa)) is disordered. 2 stretches are compositionally biased toward polar residues: residues 230–239 (SRPTAPSRPS) and 253–263 (TPPSTNTKGAA).

Functionally, probably does not play a direct role in plasmid integration or excision. This is an uncharacterized protein from Saccharopolyspora erythraea (Streptomyces erythraeus).